Here is a 519-residue protein sequence, read N- to C-terminus: Cyclic AMP-responsive element-binding protein 3-like protein 1 (519 aa).

Residues 1 to 60 (MDAVLEPFPADRLFPGSSFLDLGDLNESDFLNNAHFPEHLDHFTENMEDFSNDLFSSFFD) are required for transcriptional activation. Topologically, residues 1-374 (MDAVLEPFPA…YKMAATQTGT (374 aa)) are cytoplasmic. Residues 71–98 (LDMELDSPTPGIQAEHSYSLSGDSAPQS) form a disordered region. A compositionally biased stretch (polar residues) spans 86–97 (HSYSLSGDSAPQ). A Glycyl lysine isopeptide (Lys-Gly) (interchain with G-Cter in SUMO2) cross-link involves residue K184. A disordered region spans residues 200–259 (DLVQMPPTPPSSHGSDSDGSQSPRSLPPSSPVRPMARSSTAISTSPLLTAPHKLQGTSGP). Low complexity predominate over residues 210-223 (SSHGSDSDGSQSPR). Polar residues predominate over residues 236–246 (RSSTAISTSPL). Positions 290-353 (ALKRVRRKIK…RTLLQQLQKL (64 aa)) constitute a bZIP domain. The basic motif stretch occupies residues 292-321 (KRVRRKIKNKISAQESRRKKKEYVECLEKK). The leucine-zipper stretch occupies residues 332–353 (LWKKVETLENANRTLLQQLQKL). The helical; Signal-anchor for type II membrane protein transmembrane segment at 375 to 395 (CLMVAALCFVLVLGSLVPCLP) threads the bilayer. The MBTPS2 recognition signature appears at 392–395 (PCLP). The Lumenal segment spans residues 396–519 (EFSSGSQTVK…LGPNTTIKLS (124 aa)). An MBTPS1 recognition motif is present at residues 423 to 426 (RSLL). The tract at residues 484-519 (EAWPKDGGNGTSPDFSHSKEWFHDRDLGPNTTIKLS) is disordered. N492 carries an N-linked (GlcNAc...) asparagine glycan. Residues 499–510 (SHSKEWFHDRDL) show a composition bias toward basic and acidic residues. N513 is a glycosylation site (N-linked (GlcNAc...) asparagine).

This sequence belongs to the bZIP family. ATF subfamily. As to quaternary structure, interacts with SMAD4, the interaction takes place upon TGFB1 induction and SMAD4 acts as a CREB3L1 coactivator to induce the expression of genes involved in assembly of collagen extracellular matrix. Post-translationally, upon ER stress or DNA damage, translocated to the Golgi apparatus, where it is processed by regulated intramembrane proteolysis (RIP) to release the cytosol-facing N-terminal transcription factor domain. The cleavage is performed sequentially by site-1 and site-2 proteases (S1P/MBTPS1 and S2P/MBTPS2). RIP is induced by TGFB1 and ceramide. N-glycosylated. In terms of processing, ubiquitinated by HRD1/SYVN1; undergoes 'Lys-48'-linked ubiquitination, followed by rapid proteasomal degradation under normal conditions. Upon ER stress, SYVN1 E3 ubiquitin-protein ligase dissociates from its substrate, ubiquitination does not occur and CREB3L1 is stabilized. In terms of tissue distribution, expressed in several tissues, with highest levels in pancreas and prostate. Expressed at relatively lower levels in brain.

Its subcellular location is the endoplasmic reticulum membrane. The protein resides in the nucleus. Its function is as follows. Precursor of the transcription factor form (Processed cyclic AMP-responsive element-binding protein 3-like protein 1), which is embedded in the endoplasmic reticulum membrane with N-terminal DNA-binding and transcription activation domains oriented toward the cytosolic face of the membrane. In response to ER stress or DNA damage, transported to the Golgi, where it is cleaved in a site-specific manner by resident proteases S1P/MBTPS1 and S2P/MBTPS2. The released N-terminal cytosolic domain is translocated to the nucleus where it activates transcription of specific target genes involved in the cell-cycle progression inhibition. Functionally, transcription factor involved in cell type specific DNA damage and unfolded protein response (UPR). Binds the DNA consensus sequence 5'-GTGXGCXGC-3'. Plays a critical role in bone formation through the transcription of COL1A1, and possibly COL1A2, and the secretion of bone matrix proteins. Directly binds to the UPR element (UPRE)-like sequence in an osteoblast-specific COL1A1 promoter region and induces its transcription. Does not regulate COL1A1 in other tissues, such as skin. Required to protect astrocytes from ER stress-induced cell death. In astrocytes, binds to the cAMP response element (CRE) of the BiP/HSPA5 promoter and participate in its transcriptional activation. In astrocytes and osteoblasts, upon DNA damage, inhibits cell-cycle progression after G2/M phase by binding to promoters and activating transcription of genes encoding cell-cycle inhibitors, such as p21/CDKN1A. Required for TGFB1 to activate genes involved in the assembly of collagen extracellular matrix. (Microbial infection) May play a role in limiting virus spread by inhibiting proliferation of virus-infected cells. Upon infection with diverse DNA and RNA viruses, inhibits cell-cycle progression by binding to promoters and activating transcription of genes encoding cell-cycle inhibitors, such as p21/CDKN1A. This Homo sapiens (Human) protein is Cyclic AMP-responsive element-binding protein 3-like protein 1.